The chain runs to 506 residues: Probable cytochrome P450 309a1 (506 aa).

Phosphothreonine is present on residues Thr-75, Thr-78, and Thr-81. Cys-452 provides a ligand contact to heme.

The protein belongs to the cytochrome P450 family. The cofactor is heme.

It localises to the endoplasmic reticulum membrane. The protein resides in the microsome membrane. May be involved in the metabolism of insect hormones and in the breakdown of synthetic insecticides. The polypeptide is Probable cytochrome P450 309a1 (Cyp309a1) (Drosophila melanogaster (Fruit fly)).